Here is a 346-residue protein sequence, read N- to C-terminus: Serine/threonine-protein phosphatase PP1(5.9) (346 aa).

4 residues coordinate Mn(2+): D102, H104, D130, and N162. The active-site Proton donor is the H163. Residues H211 and H287 each coordinate Mn(2+).

It belongs to the PPP phosphatase family. PP-1 subfamily. Requires Mn(2+) as cofactor.

It carries out the reaction O-phospho-L-seryl-[protein] + H2O = L-seryl-[protein] + phosphate. The catalysed reaction is O-phospho-L-threonyl-[protein] + H2O = L-threonyl-[protein] + phosphate. The protein is Serine/threonine-protein phosphatase PP1(5.9) of Trypanosoma brucei brucei.